A 400-amino-acid chain; its full sequence is S-adenosylmethionine synthase (400 aa).

H17 lines the ATP pocket. Position 19 (D19) interacts with Mg(2+). A K(+)-binding site is contributed by E45. L-methionine-binding residues include E58 and Q101. The interval 101 to 111 (QSPDIAMGVDQ) is flexible loop. Residues 177–179 (DGK), 244–245 (RF), D253, 259–260 (RK), A276, and K280 contribute to the ATP site. D253 provides a ligand contact to L-methionine. K284 lines the L-methionine pocket.

It belongs to the AdoMet synthase family. As to quaternary structure, homotetramer; dimer of dimers. The cofactor is Mg(2+). K(+) is required as a cofactor.

It localises to the cytoplasm. The catalysed reaction is L-methionine + ATP + H2O = S-adenosyl-L-methionine + phosphate + diphosphate. The protein operates within amino-acid biosynthesis; S-adenosyl-L-methionine biosynthesis; S-adenosyl-L-methionine from L-methionine: step 1/1. Catalyzes the formation of S-adenosylmethionine (AdoMet) from methionine and ATP. The overall synthetic reaction is composed of two sequential steps, AdoMet formation and the subsequent tripolyphosphate hydrolysis which occurs prior to release of AdoMet from the enzyme. This Bacillus licheniformis (strain ATCC 14580 / DSM 13 / JCM 2505 / CCUG 7422 / NBRC 12200 / NCIMB 9375 / NCTC 10341 / NRRL NRS-1264 / Gibson 46) protein is S-adenosylmethionine synthase.